The sequence spans 95 residues: Aspartyl/glutamyl-tRNA(Asn/Gln) amidotransferase subunit C (95 aa).

The protein belongs to the GatC family. Heterotrimer of A, B and C subunits.

The catalysed reaction is L-glutamyl-tRNA(Gln) + L-glutamine + ATP + H2O = L-glutaminyl-tRNA(Gln) + L-glutamate + ADP + phosphate + H(+). It carries out the reaction L-aspartyl-tRNA(Asn) + L-glutamine + ATP + H2O = L-asparaginyl-tRNA(Asn) + L-glutamate + ADP + phosphate + 2 H(+). Its function is as follows. Allows the formation of correctly charged Asn-tRNA(Asn) or Gln-tRNA(Gln) through the transamidation of misacylated Asp-tRNA(Asn) or Glu-tRNA(Gln) in organisms which lack either or both of asparaginyl-tRNA or glutaminyl-tRNA synthetases. The reaction takes place in the presence of glutamine and ATP through an activated phospho-Asp-tRNA(Asn) or phospho-Glu-tRNA(Gln). The polypeptide is Aspartyl/glutamyl-tRNA(Asn/Gln) amidotransferase subunit C (Dehalococcoides mccartyi (strain CBDB1)).